We begin with the raw amino-acid sequence, 291 residues long: Phosphate import ATP-binding protein PstB (291 aa).

The 242-residue stretch at 45 to 286 (YSTQNLDLWY…PADKQTEDYI (242 aa)) folds into the ABC transporter domain. 77–84 (GPSGCGKS) contacts ATP.

The protein belongs to the ABC transporter superfamily. Phosphate importer (TC 3.A.1.7) family. In terms of assembly, the complex is composed of two ATP-binding proteins (PstB), two transmembrane proteins (PstC and PstA) and a solute-binding protein (PstS).

The protein resides in the cell membrane. The catalysed reaction is phosphate(out) + ATP + H2O = ADP + 2 phosphate(in) + H(+). In terms of biological role, part of the ABC transporter complex PstSACB involved in phosphate import. Responsible for energy coupling to the transport system. The polypeptide is Phosphate import ATP-binding protein PstB (Staphylococcus epidermidis (strain ATCC 35984 / DSM 28319 / BCRC 17069 / CCUG 31568 / BM 3577 / RP62A)).